The sequence spans 654 residues: Spindle assembly abnormal protein 6 homolog (654 aa).

Residues 39–91 enclose the PISA domain; that stretch reads VHRKDLVIRLTDDTDPFFLYNLVISEEDFQSLKLQQGLLVDFLAFPQKFIDLL. The stretch at 175–471 forms a coiled coil; that stretch reads TRQLHITQET…QLLKNNEKLI (297 aa). S509 carries the phosphoserine modification. Residues 568–589 are disordered; the sequence is ASIDGQPGAAVNRPCSNDKENG. S612 carries the post-translational modification Phosphoserine. A compositionally biased stretch (low complexity) spans 634–644; it reads SKPTVLPSSSS. Positions 634-654 are disordered; the sequence is SKPTVLPSSSSAYFPGQLPSS. S654 is subject to Phosphoserine.

In terms of assembly, nine homodimers form a cartwheel structure with an internal diameter of 23 nm and radial spokes connecting to the microtubule triplets. Forms a complex with CPAP and STIL. Interacts with FBXW5. Interacts with NUP62 and TUBG1 at the centrosome. Interacts with CENATAC; the interaction increases with CENATAC acetylation. Interacts with FZR1; the interaction is regulated by CENATAC and leads to SASS6 proteasomal degradation. Ubiquitinated by the SCF(FBXW5) E3 ubiquitin-protein ligase complex during S phase, leading to its degradation and preventing centriole reduplication. Ubiquitinated by the anaphase promoting complex/cyclosome (APC/C) E3 ubiquitin-protein ligase complex, leading to its degradation and preventing centriole reduplication.

It localises to the cytoplasm. The protein resides in the cytoskeleton. It is found in the microtubule organizing center. Its subcellular location is the centrosome. The protein localises to the centriole. Functionally, central scaffolding component of the centrioles ensuring their 9-fold symmetry. Required for centrosome biogenesis and duplication. Required both for mother-centriole-dependent centriole duplication and deuterosome-dependent centriole amplification in multiciliated cells. Not required for centriole formation in embryonic stem cells but necessary to maintain centriole architecture. Required for the recruitment of STIL to the procentriole and for STIL-mediated centriole amplification. This chain is Spindle assembly abnormal protein 6 homolog, found in Mus musculus (Mouse).